A 205-amino-acid polypeptide reads, in one-letter code: Thymidine kinase (205 aa).

ATP is bound by residues 9–16 (SAMNAGKS) and 87–90 (DECQ). Residue Glu-88 is the Proton acceptor of the active site. Positions 145, 147, 182, and 185 each coordinate Zn(2+).

The protein belongs to the thymidine kinase family. As to quaternary structure, homotetramer.

Its subcellular location is the cytoplasm. It catalyses the reaction thymidine + ATP = dTMP + ADP + H(+). In Shigella dysenteriae serotype 1 (strain Sd197), this protein is Thymidine kinase.